A 101-amino-acid chain; its full sequence is MAITEEQVKHVAKLSKLSFSEEELADFTNQLDKIIDMVELLEEVDTTGVPFTSNVNESINVMREDVATPGMDRKELMRNVPESENGYIKVPAIMDNGEAGA.

This sequence belongs to the GatC family. In terms of assembly, heterotrimer of A, B and C subunits.

It carries out the reaction L-glutamyl-tRNA(Gln) + L-glutamine + ATP + H2O = L-glutaminyl-tRNA(Gln) + L-glutamate + ADP + phosphate + H(+). It catalyses the reaction L-aspartyl-tRNA(Asn) + L-glutamine + ATP + H2O = L-asparaginyl-tRNA(Asn) + L-glutamate + ADP + phosphate + 2 H(+). Functionally, allows the formation of correctly charged Asn-tRNA(Asn) or Gln-tRNA(Gln) through the transamidation of misacylated Asp-tRNA(Asn) or Glu-tRNA(Gln) in organisms which lack either or both of asparaginyl-tRNA or glutaminyl-tRNA synthetases. The reaction takes place in the presence of glutamine and ATP through an activated phospho-Asp-tRNA(Asn) or phospho-Glu-tRNA(Gln). The polypeptide is Aspartyl/glutamyl-tRNA(Asn/Gln) amidotransferase subunit C (Enterococcus faecalis (strain ATCC 700802 / V583)).